An 894-amino-acid polypeptide reads, in one-letter code: MVQQIDAPLREDVRLLGNLLGETLKQHAGQELFNQIEQIRALAKGARDGQAEAEKQLEQLFLELPDEELLPLTRAFSHFLNFANIAEQYHVVRSRRQAEFDPDANSPNPLVHLFKKFKDKNISTEKLFQQICDLKIELVLTAHPTEVSRRTLIQKYDDINACLSQLDQQKLTPRERQNALANLKQQISSAWQTDEIRQHRPTPVDEAKWGFATIEQTLWNAVPKFIRELNELVQDNCQQNLPLHIAPVRFASWMGGDRDGNPNVTHQITQEVLWLSRWQAADLYLRDIENLRWELSIQSCSEEMVQAIGSPHPEPYREYLRATRERLKATRHWLAQRLQGLEADDSNVIKSKDELLQPLLLCYRSLIDSNLPEIANGQLLDFIYRVNCFGIELLKLDIRQESGRHRQAISAITEYLGLGNFESWTEQARQNFLIQELQSKRPLLPKYINEPEGSLIGHPDVQEVFATMRTLADQPPESLGAYIISMAEYPSDVLAVLLLQKEAGIQHPLRVVPLFETLKDLDGAATTMNTLFNMHWYKQHIQGKHEVMIGYSDSAKDAGFMSANWAQYRAQEELTAIARKHGVQLTLFHGRGGSISRGGAPTQQALFSQPPGSISGAIRVTEQGEMIRFKFGLEGIAMQNLEIYTAATLEATLLPPPEPKAEWRELMNRMTDHSVKVYRQTVRENPHFVKYLRTVTPELELQMLPLGSRPAKRKVSGGIESLRAIPWVFAWTQIRLMLPAWLGTGAAINEVIADQQKATLDEMLQQWPYFQTLIDMLEMVLSKADANIALYYESHLTEDEDLKVLGNQLRQRLKDAVETLLTLKDESKLLSDNEVLDQSMQVRKPYLLPLHLLQAELMKRRRDYLAERQAEHTPVDHALMVSIAGIAAGLRNTG.

Active-site residues include histidine 143 and lysine 556.

The protein belongs to the PEPCase type 1 family. It depends on Mg(2+) as a cofactor.

The catalysed reaction is oxaloacetate + phosphate = phosphoenolpyruvate + hydrogencarbonate. Forms oxaloacetate, a four-carbon dicarboxylic acid source for the tricarboxylic acid cycle. This is Phosphoenolpyruvate carboxylase from Acinetobacter baumannii (strain ATCC 17978 / DSM 105126 / CIP 53.77 / LMG 1025 / NCDC KC755 / 5377).